Consider the following 481-residue polypeptide: Glycogen synthase (481 aa).

Residue Lys-16 coordinates ADP-alpha-D-glucose.

It belongs to the glycosyltransferase 1 family. Bacterial/plant glycogen synthase subfamily.

It catalyses the reaction [(1-&gt;4)-alpha-D-glucosyl](n) + ADP-alpha-D-glucose = [(1-&gt;4)-alpha-D-glucosyl](n+1) + ADP + H(+). The protein operates within glycan biosynthesis; glycogen biosynthesis. In terms of biological role, synthesizes alpha-1,4-glucan chains using ADP-glucose. This is Glycogen synthase from Lacticaseibacillus casei (strain BL23) (Lactobacillus casei).